A 130-amino-acid polypeptide reads, in one-letter code: Profilin-1 (130 aa).

Belongs to the profilin family. In terms of assembly, interacts with actin. Interacts with RHO1 (GTP-bound form).

It localises to the cytoplasm. Its subcellular location is the cytoskeleton. The protein localises to the cell projection. The protein resides in the phagocytic cup. It is found in the cytoplasmic vesicle. It localises to the phagosome. In terms of biological role, binds to actin and affects the structure of the cytoskeleton. At high concentrations, profilin prevents the polymerization of actin, whereas it enhances it at low concentrations. By binding to PIP2, it inhibits the formation of IP3 and DG. This is Profilin-1 from Entamoeba histolytica (strain ATCC 30459 / HM-1:IMSS / ABRM).